We begin with the raw amino-acid sequence, 463 residues long: Glutamate--tRNA ligase 1 (463 aa).

The 'HIGH' region signature appears at 11–21 (PSPTGYLHIGG). A 'KMSKS' region motif is present at residues 240 to 244 (KLSKR). Lys243 contributes to the ATP binding site.

This sequence belongs to the class-I aminoacyl-tRNA synthetase family. Glutamate--tRNA ligase type 1 subfamily. As to quaternary structure, monomer.

It is found in the cytoplasm. The enzyme catalyses tRNA(Glu) + L-glutamate + ATP = L-glutamyl-tRNA(Glu) + AMP + diphosphate. Functionally, catalyzes the attachment of glutamate to tRNA(Glu) in a two-step reaction: glutamate is first activated by ATP to form Glu-AMP and then transferred to the acceptor end of tRNA(Glu). The sequence is that of Glutamate--tRNA ligase 1 from Campylobacter jejuni subsp. doylei (strain ATCC BAA-1458 / RM4099 / 269.97).